A 466-amino-acid polypeptide reads, in one-letter code: MTLKASEGEGGGGMRTALSDLYLEHLLQKHNRPEPVSPQLSAVMEDMYTNGPAALGSPAQTQGQEARKVRLIQFEKVTEEPMGITLKLNEKQSCTVARILHGGMVHRQGSLHVGDEILEINGTNVTNHSVDQLQKAMKETKGMISLKVIPNQQNRLPALQMFMRAQFDYDPRKDNLIPCKEAGLKFLTGDVIQIINKDDSNWWQGRVEGSSQESAGLIPSPELQEWRVASGAHSAPSEAPSCSPFGKKKKYKDKYLAKHSAIFDQLDVVSYEEVVRLPAFKRKTLVLIGASGVGRSHIKSALLSQNPDKFAYPAPYTTRPARKSEEDGKEYHFISTEEMTRSISANEFLEFGSYQGNMFGTKFETVHQIHKQDKVAILDIEPQTLKIVRTAELSPFIVFIAPTDQGTQTDTLQQLQKDSEAIRSQYAHYFDLSLVNNSVEETLKTLQETFDQACRSPQWVPVSWVY.

Thr2 is modified (N-acetylthreonine). The residue at position 19 (Ser19) is a Phosphoserine. A Phosphothreonine modification is found at Thr49. Phosphoserine is present on residues Ser57 and Ser110. Positions 71–152 (LIQFEKVTEE…MISLKVIPNQ (82 aa)) constitute a PDZ domain. The 71-residue stretch at 158 to 228 (ALQMFMRAQF…PSPELQEWRV (71 aa)) folds into the SH3 domain. Ser243 is subject to Phosphoserine. An interaction with PALS1 region spans residues 268–466 (VVSYEEVVRL…PQWVPVSWVY (199 aa)). In terms of domain architecture, Guanylate kinase-like spans 282-451 (RKTLVLIGAS…TLKTLQETFD (170 aa)).

Belongs to the MAGUK family. As to quaternary structure, heterodimer with PALS1. Interacts with DLG5 and NF2. Interacts (via guanylate kinase-like domain) with WHRN (via third PDZ domain). Interacts with PALS1. Palmitoylated.

It localises to the cell membrane. The protein localises to the cell projection. It is found in the stereocilium. Its function is as follows. Essential regulator of neutrophil polarity. Regulates neutrophil polarization by regulating AKT1 phosphorylation through a mechanism that is independent of PIK3CG activity. The sequence is that of 55 kDa erythrocyte membrane protein (MPP1) from Bos taurus (Bovine).